The sequence spans 319 residues: Nucleotide-binding protein Rru_A3448 (319 aa).

Residues 1–34 (MGRSASLLRLRDPAPLPTDIAPDPAEAPPSPAAD) form a disordered region. Residue 42 to 49 (GMSGAGRT) coordinates ATP. 90–93 (DTRT) serves as a coordination point for GTP.

Belongs to the RapZ-like family.

Displays ATPase and GTPase activities. The sequence is that of Nucleotide-binding protein Rru_A3448 from Rhodospirillum rubrum (strain ATCC 11170 / ATH 1.1.1 / DSM 467 / LMG 4362 / NCIMB 8255 / S1).